We begin with the raw amino-acid sequence, 81 residues long: Photosystem I iron-sulfur center (81 aa).

4Fe-4S ferredoxin-type domains are found at residues 2–31 (SHSV…MIPW) and 39–68 (IASA…VRVS). 8 residues coordinate [4Fe-4S] cluster: cysteine 11, cysteine 14, cysteine 17, cysteine 21, cysteine 48, cysteine 51, cysteine 54, and cysteine 58.

The eukaryotic PSI reaction center is composed of at least 11 subunits. It depends on [4Fe-4S] cluster as a cofactor.

It is found in the plastid. The protein localises to the chloroplast thylakoid membrane. The enzyme catalyses reduced [plastocyanin] + hnu + oxidized [2Fe-2S]-[ferredoxin] = oxidized [plastocyanin] + reduced [2Fe-2S]-[ferredoxin]. In terms of biological role, apoprotein for the two 4Fe-4S centers FA and FB of photosystem I (PSI); essential for photochemical activity. FB is the terminal electron acceptor of PSI, donating electrons to ferredoxin. The C-terminus interacts with PsaA/B/D and helps assemble the protein into the PSI complex. Required for binding of PsaD and PsaE to PSI. PSI is a plastocyanin-ferredoxin oxidoreductase, converting photonic excitation into a charge separation, which transfers an electron from the donor P700 chlorophyll pair to the spectroscopically characterized acceptors A0, A1, FX, FA and FB in turn. In Daucus carota (Wild carrot), this protein is Photosystem I iron-sulfur center.